The following is a 545-amino-acid chain: Probable protein kinase UbiB (545 aa).

The 379-residue stretch at Asp-123 to Leu-501 folds into the Protein kinase domain. ATP-binding positions include Leu-129–Val-137 and Lys-152. Residue Asp-287 is the Proton acceptor of the active site. Residues Leu-508–Ile-528 traverse the membrane as a helical segment.

Belongs to the ABC1 family. UbiB subfamily.

The protein localises to the cell inner membrane. It functions in the pathway cofactor biosynthesis; ubiquinone biosynthesis [regulation]. In terms of biological role, is probably a protein kinase regulator of UbiI activity which is involved in aerobic coenzyme Q (ubiquinone) biosynthesis. This chain is Probable protein kinase UbiB, found in Photorhabdus laumondii subsp. laumondii (strain DSM 15139 / CIP 105565 / TT01) (Photorhabdus luminescens subsp. laumondii).